Reading from the N-terminus, the 213-residue chain is Outer-membrane lipoprotein carrier protein (213 aa).

A signal peptide spans 1 to 18 (MKYFATICIAAYAGLAGA).

The protein belongs to the LolA family. Monomer.

The protein localises to the periplasm. In terms of biological role, participates in the translocation of lipoproteins from the inner membrane to the outer membrane. Only forms a complex with a lipoprotein if the residue after the N-terminal Cys is not an aspartate (The Asp acts as a targeting signal to indicate that the lipoprotein should stay in the inner membrane). This Albidiferax ferrireducens (strain ATCC BAA-621 / DSM 15236 / T118) (Rhodoferax ferrireducens) protein is Outer-membrane lipoprotein carrier protein.